The sequence spans 561 residues: Dihydroxy-acid dehydratase (561 aa).

Asp-78 is a binding site for Mg(2+). Cys-119 contacts [2Fe-2S] cluster. 2 residues coordinate Mg(2+): Asp-120 and Lys-121. Residue Lys-121 is modified to N6-carboxylysine. Position 192 (Cys-192) interacts with [2Fe-2S] cluster. Residue Glu-448 coordinates Mg(2+). The active-site Proton acceptor is Ser-474.

Belongs to the IlvD/Edd family. Homodimer. Requires [2Fe-2S] cluster as cofactor. The cofactor is Mg(2+).

It carries out the reaction (2R)-2,3-dihydroxy-3-methylbutanoate = 3-methyl-2-oxobutanoate + H2O. The catalysed reaction is (2R,3R)-2,3-dihydroxy-3-methylpentanoate = (S)-3-methyl-2-oxopentanoate + H2O. It participates in amino-acid biosynthesis; L-isoleucine biosynthesis; L-isoleucine from 2-oxobutanoate: step 3/4. Its pathway is amino-acid biosynthesis; L-valine biosynthesis; L-valine from pyruvate: step 3/4. Functions in the biosynthesis of branched-chain amino acids. Catalyzes the dehydration of (2R,3R)-2,3-dihydroxy-3-methylpentanoate (2,3-dihydroxy-3-methylvalerate) into 2-oxo-3-methylpentanoate (2-oxo-3-methylvalerate) and of (2R)-2,3-dihydroxy-3-methylbutanoate (2,3-dihydroxyisovalerate) into 2-oxo-3-methylbutanoate (2-oxoisovalerate), the penultimate precursor to L-isoleucine and L-valine, respectively. The chain is Dihydroxy-acid dehydratase from Sulfurimonas denitrificans (strain ATCC 33889 / DSM 1251) (Thiomicrospira denitrificans (strain ATCC 33889 / DSM 1251)).